We begin with the raw amino-acid sequence, 1040 residues long: Multidrug resistance protein MdtB (1040 aa).

The next 12 helical transmembrane spans lie at 16-36 (FIMR…AGII), 347-367 (LMMA…NIPA), 369-389 (IIPG…MVFL), 396-416 (LTLM…IVVI), 440-460 (IGFT…PLLF), 472-492 (FAIT…TLTP), 537-557 (WLTL…WVFI), 863-883 (LGST…VLGI), 888-908 (FIHP…ALLA), 911-931 (IAGS…IGIV), 968-988 (ILMT…STGV), and 998-1018 (IGMV…TPVI).

It belongs to the resistance-nodulation-cell division (RND) (TC 2.A.6) family. MdtB subfamily. Part of a tripartite efflux system composed of MdtA, MdtB and MdtC. MdtB forms a heteromultimer with MdtC.

Its subcellular location is the cell inner membrane. The MdtABC tripartite complex confers resistance against novobiocin and deoxycholate. This Escherichia fergusonii (strain ATCC 35469 / DSM 13698 / CCUG 18766 / IAM 14443 / JCM 21226 / LMG 7866 / NBRC 102419 / NCTC 12128 / CDC 0568-73) protein is Multidrug resistance protein MdtB.